Reading from the N-terminus, the 218-residue chain is N-(5'-phosphoribosyl)anthranilate isomerase (218 aa).

The protein belongs to the TrpF family.

It catalyses the reaction N-(5-phospho-beta-D-ribosyl)anthranilate = 1-(2-carboxyphenylamino)-1-deoxy-D-ribulose 5-phosphate. It functions in the pathway amino-acid biosynthesis; L-tryptophan biosynthesis; L-tryptophan from chorismate: step 3/5. The protein is N-(5'-phosphoribosyl)anthranilate isomerase of Alcanivorax borkumensis (strain ATCC 700651 / DSM 11573 / NCIMB 13689 / SK2).